Here is a 994-residue protein sequence, read N- to C-terminus: Regulator of telomere elongation helicase 1 homolog (994 aa).

The 310-residue stretch at 7–316 (AGIPVHFPFE…DDLMLLKEML (310 aa)) folds into the Helicase ATP-binding domain. An ATP-binding site is contributed by 42-49 (SPTGTGKT). Positions 146, 164, 173, and 209 each coordinate [4Fe-4S] cluster. Residues 252-255 (DEAH) carry the DEAH box motif. The segment at 861 to 887 (SSGLVKIHKRERSSPPGSSQSSSQTAK) is disordered. The span at 874–884 (SPPGSSQSSSQ) shows a compositional bias: low complexity.

This sequence belongs to the helicase family. RAD3/XPD subfamily.

Its subcellular location is the nucleus. The catalysed reaction is ATP + H2O = ADP + phosphate + H(+). A probable ATP-dependent DNA helicase implicated in DNA repair and the maintenance of genomic stability. Acts as an anti-recombinase to counteract toxic recombination and limit crossover during meiosis. Regulates meiotic recombination and crossover homeostasis by physically dissociating strand invasion events and thereby promotes noncrossover repair by meiotic synthesis dependent strand annealing (SDSA) as well as disassembly of D loop recombination intermediates. This is Regulator of telomere elongation helicase 1 homolog from Drosophila ananassae (Fruit fly).